Here is a 348-residue protein sequence, read N- to C-terminus: tRNA N6-adenosine threonylcarbamoyltransferase (348 aa).

Residues H116 and H120 each coordinate Fe cation. Substrate-binding positions include 138–142 (QVSGG), D171, G184, D188, and N277. D309 lines the Fe cation pocket.

Belongs to the KAE1 / TsaD family. Fe(2+) serves as cofactor.

It is found in the cytoplasm. The enzyme catalyses L-threonylcarbamoyladenylate + adenosine(37) in tRNA = N(6)-L-threonylcarbamoyladenosine(37) in tRNA + AMP + H(+). Required for the formation of a threonylcarbamoyl group on adenosine at position 37 (t(6)A37) in tRNAs that read codons beginning with adenine. Is involved in the transfer of the threonylcarbamoyl moiety of threonylcarbamoyl-AMP (TC-AMP) to the N6 group of A37, together with TsaE and TsaB. TsaD likely plays a direct catalytic role in this reaction. The chain is tRNA N6-adenosine threonylcarbamoyltransferase from Lactobacillus johnsonii (strain CNCM I-12250 / La1 / NCC 533).